Here is a 395-residue protein sequence, read N- to C-terminus: Calcium sensing receptor, chloroplastic (395 aa).

Positions Met1 to Leu12 are enriched in low complexity. Residues Met1–Trp27 are disordered. The transit peptide at Met1–Ala39 directs the protein to the chloroplast. The Lumenal, thylakoid segment spans residues Ala40–Tyr182. Residues Val183–Val203 traverse the membrane as a helical segment. The Stromal portion of the chain corresponds to Ser204–Asp395. The Rhodanese domain occupies Thr224–Ser345. Thr377 carries the post-translational modification Phosphothreonine.

Phosphorylated in both bundle sheath and mesophyll cells, under both low and high light regimes (70 vs 900 umol photons/m-2/s).

The protein resides in the plastid. It is found in the chloroplast thylakoid membrane. Functionally, modulates cytoplasmic Ca(2+) concentration and is crucial for proper stomatal regulation in response to elevated levels of external Ca(2+). May function by regulating concentrations of inositol 1,4,5-trisphosphate (IP3), which in turn triggers release of Ca(2+) from internal stores. May play a role in de-etiolation. The polypeptide is Calcium sensing receptor, chloroplastic (Zea mays (Maize)).